The following is a 994-amino-acid chain: Chloride channel protein E (994 aa).

The segment at Met1 to Ile33 is disordered. Residues Met1 to Thr163 are Cytoplasmic-facing. Low complexity predominate over residues Ser11 to Ser32. Transmembrane regions (helical) follow at residues Leu164–Leu184, Ile227–Ile247, Val271–Gly291, Phe300–Ile320, Ala334–Ile354, Val362–Leu382, Leu410–Ile430, Ile449–Leu469, Leu505–Pro525, Gly527–Leu547, and Gln554–Ile574. A CBS 1 domain is found at Met644 to Gln705. 3 disordered regions span residues Phe715–Asn767, Ile802–Glu822, and Asp846–Ile872. Low complexity-rich tracts occupy residues Asn717–Asn764 and Ser809–Glu822. Residues His859–Asp870 are compositionally biased toward acidic residues. The CBS 2 domain occupies Met944–Leu994.

It belongs to the chloride channel (TC 2.A.49) family.

It localises to the membrane. Voltage-gated chloride channel. Chloride channels may have several functions including the regulation of cell volume, membrane potential stabilization and signal transduction. The polypeptide is Chloride channel protein E (clcE) (Dictyostelium discoideum (Social amoeba)).